Here is a 184-residue protein sequence, read N- to C-terminus: Probable RNA 2'-phosphotransferase (184 aa).

Belongs to the KptA/TPT1 family.

In terms of biological role, removes the 2'-phosphate from RNA via an intermediate in which the phosphate is ADP-ribosylated by NAD followed by a presumed transesterification to release the RNA and generate ADP-ribose 1''-2''-cyclic phosphate (APPR&gt;P). May function as an ADP-ribosylase. In Shigella boydii serotype 18 (strain CDC 3083-94 / BS512), this protein is Probable RNA 2'-phosphotransferase.